We begin with the raw amino-acid sequence, 238 residues long: MRLRTSLGVASACASVASAALKVTEDNSTITLANDRLTSTFAKDKGRVSELFLDGQDLLGPISGNTGVGPYLDCYCIPSGFYTAGSTDPRLEVVQGTDSTGTKYAGVILNDTYTPTGQQFQQYWFLRDGETGLHTFSRLAYYNETTPFLRNLQEFRTLFRPNTELWTHLTSSEAQTAPLPSKEAIANEVVVQDATWRFNNTPNDAYYTQFSEYFTKYTFSNCMGLFKTYWYAASANLQ.

The N-terminal stretch at 1 to 19 is a signal peptide; it reads MRLRTSLGVASACASVASA. Asparagine 27, asparagine 110, and asparagine 143 each carry an N-linked (GlcNAc...) asparagine glycan.

The protein belongs to the polysaccharide lyase 4 family.

It localises to the secreted. It catalyses the reaction Endotype eliminative cleavage of L-alpha-rhamnopyranosyl-(1-&gt;4)-alpha-D-galactopyranosyluronic acid bonds of rhamnogalacturonan I domains in ramified hairy regions of pectin leaving L-rhamnopyranose at the reducing end and 4-deoxy-4,5-unsaturated D-galactopyranosyluronic acid at the non-reducing end.. In terms of biological role, pectinolytic enzymes consist of four classes of enzymes: pectin lyase, polygalacturonase, pectin methylesterase and rhamnogalacturonase. Degrades the rhamnogalacturonan I (RG-I) backbone of pectin. The polypeptide is Probable rhamnogalacturonate lyase B (rglB) (Aspergillus oryzae (strain ATCC 42149 / RIB 40) (Yellow koji mold)).